An 80-amino-acid polypeptide reads, in one-letter code: Conotoxin Cl9.5 (80 aa).

Positions Met1 to Ala23 are cleaved as a signal peptide. A propeptide spanning residues Gly24–Asp37 is cleaved from the precursor. Cystine bridges form between Cys42/Cys59, Cys47/Cys69, and Cys49/Cys74.

Expressed by the venom duct.

Its subcellular location is the secreted. The polypeptide is Conotoxin Cl9.5 (Californiconus californicus (California cone)).